The chain runs to 360 residues: Chorismate synthase (360 aa).

NADP(+) is bound by residues Arg48 and Arg54. Residues 125 to 127, 246 to 247, Gly286, 301 to 305, and Arg327 contribute to the FMN site; these read RSS, NA, and KPTSS.

Belongs to the chorismate synthase family. In terms of assembly, homotetramer. Requires FMNH2 as cofactor.

It catalyses the reaction 5-O-(1-carboxyvinyl)-3-phosphoshikimate = chorismate + phosphate. The protein operates within metabolic intermediate biosynthesis; chorismate biosynthesis; chorismate from D-erythrose 4-phosphate and phosphoenolpyruvate: step 7/7. Its function is as follows. Catalyzes the anti-1,4-elimination of the C-3 phosphate and the C-6 proR hydrogen from 5-enolpyruvylshikimate-3-phosphate (EPSP) to yield chorismate, which is the branch point compound that serves as the starting substrate for the three terminal pathways of aromatic amino acid biosynthesis. This reaction introduces a second double bond into the aromatic ring system. The polypeptide is Chorismate synthase (Glaesserella parasuis serovar 5 (strain SH0165) (Haemophilus parasuis)).